The sequence spans 627 residues: DNA mismatch repair protein MutL (627 aa).

Belongs to the DNA mismatch repair MutL/HexB family.

This protein is involved in the repair of mismatches in DNA. It is required for dam-dependent methyl-directed DNA mismatch repair. May act as a 'molecular matchmaker', a protein that promotes the formation of a stable complex between two or more DNA-binding proteins in an ATP-dependent manner without itself being part of a final effector complex. In Mesorhizobium japonicum (strain LMG 29417 / CECT 9101 / MAFF 303099) (Mesorhizobium loti (strain MAFF 303099)), this protein is DNA mismatch repair protein MutL.